Here is a 482-residue protein sequence, read N- to C-terminus: Cilia- and flagella-associated protein 53 (482 aa).

Coiled coils occupy residues 9-40 (DARI…AVAE), 67-124 (ADLN…QALA), and 152-413 (IEER…AKDA). Residues 462-482 (VNQTLSSTDPPVWHGRRKFDW) form a disordered region.

Belongs to the CFAP53 family.

The protein localises to the cell projection. It is found in the cilium. The protein resides in the flagellum. Functionally, may play a role in filopodium movement. The chain is Cilia- and flagella-associated protein 53 from Chlamydomonas reinhardtii (Chlamydomonas smithii).